The chain runs to 226 residues: Isoprenyl transferase (226 aa).

The active site involves Asp12. Asp12 contacts Mg(2+). Substrate-binding positions include 13–16, Trp17, Lys25, His29, and 57–59; these read GNAR and SSE. The active-site Proton acceptor is the Asn60. Residues Trp61, Arg63, Arg174, and 180 to 182 contribute to the substrate site; that span reads RIS. Residue Glu193 coordinates Mg(2+).

The protein belongs to the UPP synthase family. Homodimer. Mg(2+) is required as a cofactor.

Its function is as follows. Catalyzes the condensation of isopentenyl diphosphate (IPP) with allylic pyrophosphates generating different type of terpenoids. The polypeptide is Isoprenyl transferase (Rickettsia sibirica (strain ATCC VR-151 / 246)).